The primary structure comprises 322 residues: Delta-aminolevulinic acid dehydratase (322 aa).

Zn(2+)-binding residues include Cys-120, Cys-122, and Cys-130. Lys-195 acts as the Schiff-base intermediate with substrate in catalysis. Arg-205 and Arg-217 together coordinate 5-aminolevulinate. Glu-233 lines the Mg(2+) pocket. Lys-248 serves as the catalytic Schiff-base intermediate with substrate. Ser-274 and Tyr-312 together coordinate 5-aminolevulinate.

This sequence belongs to the ALAD family. Homooctamer. Requires Zn(2+) as cofactor.

It carries out the reaction 2 5-aminolevulinate = porphobilinogen + 2 H2O + H(+). It participates in porphyrin-containing compound metabolism; protoporphyrin-IX biosynthesis; coproporphyrinogen-III from 5-aminolevulinate: step 1/4. Its function is as follows. Catalyzes an early step in the biosynthesis of tetrapyrroles. Binds two molecules of 5-aminolevulinate per subunit, each at a distinct site, and catalyzes their condensation to form porphobilinogen. The protein is Delta-aminolevulinic acid dehydratase (hemB) of Archaeoglobus fulgidus (strain ATCC 49558 / DSM 4304 / JCM 9628 / NBRC 100126 / VC-16).